A 527-amino-acid chain; its full sequence is Ribonuclease Y (527 aa).

Residues 21–41 (ILAIFFSFIIGIVFGGMALFV) form a helical membrane-spanning segment. The segment at 78–97 (READKTRNSAETELKERRSE) is disordered. A KH domain is found at 217–302 (TTNVVPLPSD…EVVTKAKEEV (86 aa)). The HD domain maps to 343–436 (VLQHSIEVAQ…VSAADAISSA (94 aa)).

The protein belongs to the RNase Y family.

The protein resides in the cell membrane. Functionally, endoribonuclease that initiates mRNA decay. In Dehalococcoides mccartyi (strain ATCC BAA-2100 / JCM 16839 / KCTC 5957 / BAV1), this protein is Ribonuclease Y.